We begin with the raw amino-acid sequence, 107 residues long: Iron-binding protein IscA (107 aa).

Residues Cys35, Cys99, and Cys101 each contribute to the Fe cation site.

This sequence belongs to the HesB/IscA family. In terms of assembly, homodimer; may form tetramers and higher multimers. Fe cation is required as a cofactor.

In terms of biological role, is able to transfer iron-sulfur clusters to apo-ferredoxin. Multiple cycles of [2Fe2S] cluster formation and transfer are observed, suggesting that IscA acts catalytically. Recruits intracellular free iron so as to provide iron for the assembly of transient iron-sulfur cluster in IscU in the presence of IscS, L-cysteine and the thioredoxin reductase system TrxA/TrxB. In Xenorhabdus nematophila (strain ATCC 19061 / DSM 3370 / CCUG 14189 / LMG 1036 / NCIMB 9965 / AN6), this protein is Iron-binding protein IscA.